The chain runs to 182 residues: CDP-diacylglycerol--glycerol-3-phosphate 3-phosphatidyltransferase (182 aa).

Residues 1–12 lie on the Cytoplasmic side of the membrane; that stretch reads MQLNIPTWLTLF. The chain crosses the membrane as a helical span at residues 13-37; sequence RVVMIPFFVLAFYLPFKWAPLCCAL. Over 38–60 the chain is Periplasmic; sequence IFVLAAVTDWFDGFLARRWKQTT. A helical membrane pass occupies residues 61 to 81; that stretch reads RFGAFLDPVADKVMVAMALVL. The Cytoplasmic segment spans residues 82 to 86; the sequence is VAEHF. A helical membrane pass occupies residues 87-107; that stretch reads HSWWITLPAATMIAREIIISA. Topologically, residues 108–145 are periplasmic; that stretch reads LREWMAEIGKRSSVAVSWIGKVKTTAQMLALVTLLWRP. The chain crosses the membrane as a helical span at residues 146-168; that stretch reads DDIVSGIGIAALYVAAVLTFWSM. Over 169–181 the chain is Cytoplasmic; the sequence is FQYLYAARHDLFE.

Belongs to the CDP-alcohol phosphatidyltransferase class-I family.

It is found in the cell inner membrane. The catalysed reaction is a CDP-1,2-diacyl-sn-glycerol + sn-glycerol 3-phosphate = a 1,2-diacyl-sn-glycero-3-phospho-(1'-sn-glycero-3'-phosphate) + CMP + H(+). Its pathway is phospholipid metabolism; phosphatidylglycerol biosynthesis; phosphatidylglycerol from CDP-diacylglycerol: step 1/2. In terms of biological role, catalyzes the conversion of cytidine diphosphate diacylglycerol (CDP-DG) and glycerol 3-phosphate into phosphatidylglycerol. Essential for the synthesis of anionic phospholipids, thereby playing a role in balancing the ratio of zwitterionic and anionic phospholipids, which is thought to be important for normal membrane function. This is CDP-diacylglycerol--glycerol-3-phosphate 3-phosphatidyltransferase from Sodalis glossinidius (strain morsitans).